The sequence spans 273 residues: Type III pantothenate kinase (273 aa).

Residue 5–12 (DVGNSHVV) participates in ATP binding. Substrate is bound at residue 112 to 115 (GTDL). The active-site Proton acceptor is the D114. Residue D134 participates in K(+) binding. T137 is an ATP binding site. T189 provides a ligand contact to substrate.

This sequence belongs to the type III pantothenate kinase family. As to quaternary structure, homodimer. It depends on NH4(+) as a cofactor. K(+) is required as a cofactor.

It is found in the cytoplasm. The enzyme catalyses (R)-pantothenate + ATP = (R)-4'-phosphopantothenate + ADP + H(+). Its pathway is cofactor biosynthesis; coenzyme A biosynthesis; CoA from (R)-pantothenate: step 1/5. Its function is as follows. Catalyzes the phosphorylation of pantothenate (Pan), the first step in CoA biosynthesis. In Treponema pallidum (strain Nichols), this protein is Type III pantothenate kinase.